Reading from the N-terminus, the 280-residue chain is Elongation factor Ts (280 aa).

The involved in Mg(2+) ion dislocation from EF-Tu stretch occupies residues 79 to 82 (TDFV).

Belongs to the EF-Ts family.

The protein localises to the cytoplasm. Functionally, associates with the EF-Tu.GDP complex and induces the exchange of GDP to GTP. It remains bound to the aminoacyl-tRNA.EF-Tu.GTP complex up to the GTP hydrolysis stage on the ribosome. This chain is Elongation factor Ts, found in Vibrio cholerae serotype O1 (strain ATCC 39541 / Classical Ogawa 395 / O395).